The primary structure comprises 155 residues: Nuclear cap-binding protein subunit 2 (155 aa).

Residues Y19, Y42, 111–115, 122–126, and 132–133 each bind mRNA; these read RTDWD, RQYGR, and QV. Residues 39–117 enclose the RRM domain; sequence ATLYVGNLSF…RIIRTDWDAG (79 aa). The disordered stretch occupies residues 121–155; the sequence is GRQYGRGKSGGQVRDEYRQDYDPARGGYGKMVQKS. Basic and acidic residues predominate over residues 133 to 143; it reads VRDEYRQDYDP.

The protein belongs to the RRM NCBP2 family. In terms of assembly, component of the nuclear cap-binding complex (CBC), a heterodimer composed of ncbp1/cbp80 and ncbp2/cbp20 that interacts with m7GpppG-capped RNA.

It localises to the nucleus. It is found in the cytoplasm. In terms of biological role, component of the cap-binding complex (CBC), which binds co-transcriptionally to the 5' cap of pre-mRNAs and is involved in various processes such as pre-mRNA splicing, translation regulation, nonsense-mediated mRNA decay, RNA-mediated gene silencing (RNAi) by microRNAs (miRNAs) and mRNA export. The CBC complex is involved in mRNA export from the nucleus, leading to the recruitment of the mRNA export machinery to the 5' end of mRNA and to mRNA export in a 5' to 3' direction through the nuclear pore. The CBC complex is also involved in mediating U snRNA and intronless mRNAs export from the nucleus. The CBC complex is essential for a pioneer round of mRNA translation, before steady state translation when the CBC complex is replaced by cytoplasmic cap-binding protein eIF4E. The pioneer round of mRNA translation mediated by the CBC complex plays a central role in nonsense-mediated mRNA decay (NMD), NMD only taking place in mRNAs bound to the CBC complex, but not on eIF4E-bound mRNAs. The CBC complex enhances NMD in mRNAs containing at least one exon-junction complex (EJC), promoting the interaction between upf1 and upf2. The CBC complex is also involved in 'failsafe' NMD, which is independent of the EJC complex, while it does not participate in Staufen-mediated mRNA decay (SMD). During cell proliferation, the CBC complex is also involved in microRNAs (miRNAs) biogenesis via its interaction with srrt/ars2, thereby being required for miRNA-mediated RNA interference. The CBC complex also acts as a negative regulator of parn, thereby acting as an inhibitor of mRNA deadenylation. In the CBC complex, ncbp2/cbp20 recognizes and binds capped RNAs (m7GpppG-capped RNA) but requires ncbp1/cbp80 to stabilize the movement of its N-terminal loop and lock the CBC into a high affinity cap-binding state with the cap structure. The conventional cap-binding complex with NCBP2 binds both small nuclear RNA (snRNA) and messenger (mRNA) and is involved in their export from the nucleus. This chain is Nuclear cap-binding protein subunit 2 (ncbp2), found in Danio rerio (Zebrafish).